Consider the following 313-residue polypeptide: GTPase Era (313 aa).

Residues 20 to 187 (RSGFVALIGA…MDYLAETLPE (168 aa)) form the Era-type G domain. The G1 stretch occupies residues 28-35 (GATNAGKS). 28-35 (GATNAGKS) provides a ligand contact to GTP. Residues 54–58 (QTTRA) form a G2 region. The G3 stretch occupies residues 75–78 (DTPG). GTP contacts are provided by residues 75–79 (DTPGI) and 137–140 (NKVD). The tract at residues 137–140 (NKVD) is G4. The tract at residues 166 to 168 (ISA) is G5. The 78-residue stretch at 218–295 (LHQELPYASH…HLFLFVKVRE (78 aa)) folds into the KH type-2 domain.

Belongs to the TRAFAC class TrmE-Era-EngA-EngB-Septin-like GTPase superfamily. Era GTPase family. Monomer.

Its subcellular location is the cytoplasm. It is found in the cell inner membrane. In terms of biological role, an essential GTPase that binds both GDP and GTP, with rapid nucleotide exchange. Plays a role in 16S rRNA processing and 30S ribosomal subunit biogenesis and possibly also in cell cycle regulation and energy metabolism. In Rhizobium meliloti (strain 1021) (Ensifer meliloti), this protein is GTPase Era.